We begin with the raw amino-acid sequence, 1070 residues long: Potassium/chloride cotransporter 3 (1070 aa).

A run of 15 helical transmembrane segments spans residues 92 to 112 (GVML…TMFI), 114 to 134 (LFWV…AICC), 142 to 162 (ISLS…YFII), 174 to 194 (VGIL…VGGV), 196 to 216 (VILM…LHDT), 228 to 248 (LYGT…VKFV), 251 to 271 (LAPV…GGGI), 400 to 420 (FFML…GTNM), 433 to 453 (VGTI…AILF), 473 to 493 (TMVV…GAFL), 534 to 554 (PFLG…LGAV), 557 to 577 (IAEV…LIAV), 600 to 620 (LLGA…LACI), 791 to 811 (LVLF…LIVT), and 827 to 847 (FIDI…AYLL).

As to expression, expressed in the amphid sheath glia and the cephalic sheath glia. Also expressed in the inner labial and outer labial sheath and socket glia and as well as phasmid sheath glia.

It is found in the cell membrane. Its function is as follows. Probable potassium/chloride cotransporter that functions in the amphid sheath glial cells to regulate thermotaxis behavior. By maintaining chloride homeostasis, negatively regulates guanylate cyclase gcy-8 in the thermosensory AFD neurons and thereby controls the microvilli receptive ending morphology of the AFD neurons and thermotaxis. Modulates the temperature-evoked neuronal activity of the AFD neurons such as calcium responses to temperature gradients. Might also play a role in the chemotaxis behavior mediated by the sensory neurons AWA and AWC. The sequence is that of Potassium/chloride cotransporter 3 (kcc-3) from Caenorhabditis elegans.